The chain runs to 162 residues: Regulator of sigma D (162 aa).

Belongs to the Rsd/AlgQ family. As to quaternary structure, interacts with RpoD.

It is found in the cytoplasm. Functionally, binds RpoD and negatively regulates RpoD-mediated transcription activation by preventing the interaction between the primary sigma factor RpoD with the catalytic core of the RNA polymerase and with promoter DNA. May be involved in replacement of the RNA polymerase sigma subunit from RpoD to RpoS during the transition from exponential growth to the stationary phase. The polypeptide is Regulator of sigma D (Salmonella agona (strain SL483)).